The following is a 211-amino-acid chain: Uridine kinase (211 aa).

Residue 13-20 (GGSGSGKT) coordinates ATP.

This sequence belongs to the uridine kinase family.

The protein resides in the cytoplasm. The enzyme catalyses uridine + ATP = UMP + ADP + H(+). It carries out the reaction cytidine + ATP = CMP + ADP + H(+). It functions in the pathway pyrimidine metabolism; CTP biosynthesis via salvage pathway; CTP from cytidine: step 1/3. It participates in pyrimidine metabolism; UMP biosynthesis via salvage pathway; UMP from uridine: step 1/1. This chain is Uridine kinase, found in Lactobacillus johnsonii (strain CNCM I-12250 / La1 / NCC 533).